We begin with the raw amino-acid sequence, 839 residues long: Taste receptor type 1 member 2 (839 aa).

The first 19 residues, 1-19 (MGPRAKTICSLFFLLWVLA), serve as a signal peptide directing secretion. The Extracellular portion of the chain corresponds to 20–566 (EPAENSDFYL…VFLEWHEAPT (547 aa)). N-linked (GlcNAc...) asparagine glycosylation is found at Asn84, Asn248, Asn292, Asn312, Asn368, Asn407, Asn428, Asn487, and Asn527. Residues 567-587 (IAVALLAALGFLSTLAILVIF) form a helical membrane-spanning segment. The Cytoplasmic segment spans residues 588-602 (WRHFQTPIVRSAGGP). A helical membrane pass occupies residues 603–623 (MCFLMLTLLLVAYMVVPVYVG). The Extracellular segment spans residues 624–635 (PPKVSTCLCRQA). The chain crosses the membrane as a helical span at residues 636–656 (LFPLCFTICISCIAVRSFQIV). Residues 657 to 681 (CAFKMASRFPRAYSYWVRYQGPYVS) are Cytoplasmic-facing. Residues 682–702 (MAFITVLKMVIVVIGMLATGL) form a helical membrane-spanning segment. The Extracellular segment spans residues 703-727 (SPTTRTDPDDPKITIVSCNPNYRNS). A helical membrane pass occupies residues 728–748 (LLFNTSLDLLLSVVGFSFAYM). Residues 749 to 760 (GKELPTNYNEAK) are Cytoplasmic-facing. The chain crosses the membrane as a helical span at residues 761-781 (FITLSMTFYFTSSVSLCTFMS). Residues 782-784 (AYS) lie on the Extracellular side of the membrane. The chain crosses the membrane as a helical span at residues 785–805 (GVLVTIVDLLVTVLNLLAISL). Topologically, residues 806–839 (GYFGPKCYMILFYPERNTSAYFNSMIQGYTMRRD) are cytoplasmic.

This sequence belongs to the G-protein coupled receptor 3 family. TAS1R subfamily. As to quaternary structure, forms heterodimers with TAS1R3.

Its subcellular location is the cell membrane. Functionally, putative taste receptor. TAS1R2/TAS1R3 recognizes diverse natural and synthetic sweeteners. The chain is Taste receptor type 1 member 2 (TAS1R2) from Pan troglodytes (Chimpanzee).